Reading from the N-terminus, the 606-residue chain is Melanoma-associated antigen D2 (606 aa).

A disordered region spans residues 1 to 204; that stretch reads MSDTSESGAG…QASGTTGGRR (204 aa). Position 2 is an N-acetylserine (serine 2). At serine 5 the chain carries Phosphoserine. The span at 24-37 shows a compositional bias: polar residues; that stretch reads SSMMQTLLTVTQNV. Threonine 72 is subject to Phosphothreonine. Residues 81-93 are compositionally biased toward polar residues; sequence TQASSTTQLTDTQ. A compositionally biased stretch (basic and acidic residues) spans 122–131; it reads ETKKVSHVAD. The span at 142 to 164 shows a compositional bias: low complexity; the sequence is EAAPSQAPADEPEPESAAAQSQE. Serine 157 carries the post-translational modification Phosphoserine. Positions 171 to 181 are enriched in basic residues; that stretch reads KVKAKKARKVK. 6 positions are modified to phosphoserine: serine 190, serine 191, serine 194, serine 197, serine 244, and serine 247. The segment covering 248–260 has biased composition (basic residues); the sequence is PKARRGKARRRAA. Residues 248–275 form a disordered region; the sequence is PKARRGKARRRAAKLQSSQEPEAPPPRD. Phosphoserine occurs at positions 264 and 265. In terms of domain architecture, MAGE spans 279–478; sequence LQGRANDLVK…KEWAAQYREA (200 aa). Residues 534–563 are disordered; the sequence is GAEAKAKAQESGSASTGASTSTNNSASASA.

Interacts with GNAS. May interact with DNAJB1. As to expression, widely expressed. In the developing and adult kidney, expressed in the thick ascending limb of the loop of Henle and the distal convoluted tubules outside the loop.

In terms of biological role, regulates the expression, localization to the plasma membrane and function of the sodium chloride cotransporters SLC12A1 and SLC12A3, two key components of salt reabsorption in the distal renal tubule. The protein is Melanoma-associated antigen D2 (MAGED2) of Homo sapiens (Human).